We begin with the raw amino-acid sequence, 178 residues long: ATP-dependent protease subunit HslV (178 aa).

Threonine 7 is a catalytic residue. Positions 162, 165, and 168 each coordinate Na(+).

The protein belongs to the peptidase T1B family. HslV subfamily. As to quaternary structure, a double ring-shaped homohexamer of HslV is capped on each side by a ring-shaped HslU homohexamer. The assembly of the HslU/HslV complex is dependent on binding of ATP.

The protein localises to the cytoplasm. It catalyses the reaction ATP-dependent cleavage of peptide bonds with broad specificity.. Allosterically activated by HslU binding. Its function is as follows. Protease subunit of a proteasome-like degradation complex believed to be a general protein degrading machinery. This Dechloromonas aromatica (strain RCB) protein is ATP-dependent protease subunit HslV.